A 485-amino-acid chain; its full sequence is Calcium-dependent protein kinase 27 (485 aa).

Gly2 carries N-myristoyl glycine lipidation. The 263-residue stretch at 28 to 290 folds into the Protein kinase domain; sequence YILGEELGRG…AAEVLGHPWM (263 aa). ATP is bound by residues 34-42 and Lys57; that span reads LGRGNFGLT. Asp156 (proton acceptor) is an active-site residue. A Phosphoserine modification is found at Ser196. The tract at residues 295–325 is autoinhibitory domain; that stretch reads ASDKPIDGVVLSRLKRFRDANKFKKVVLKFI. 4 EF-hand domains span residues 332–367, 368–403, 404–439, and 444–474; these read EEIK…LGSN, LSKT…RYKL, DRDE…DGAG, and IKQI…ESSL. 20 residues coordinate Ca(2+): Asp345, Asp347, Ser349, Asn351, Glu356, Asp381, Asp383, Asn385, Thr387, Glu392, Asp417, Asp419, Asp421, His423, Glu428, Asp452, Asp454, Asp456, Lys458, and Glu463.

The protein belongs to the protein kinase superfamily. Ser/Thr protein kinase family. CDPK subfamily.

Its subcellular location is the membrane. The catalysed reaction is L-seryl-[protein] + ATP = O-phospho-L-seryl-[protein] + ADP + H(+). It carries out the reaction L-threonyl-[protein] + ATP = O-phospho-L-threonyl-[protein] + ADP + H(+). Its activity is regulated as follows. Activated by calcium. Autophosphorylation may play an important role in the regulation of the kinase activity. Its function is as follows. May play a role in signal transduction pathways that involve calcium as a second messenger. The protein is Calcium-dependent protein kinase 27 (CPK27) of Arabidopsis thaliana (Mouse-ear cress).